The following is a 287-amino-acid chain: DegV domain-containing protein DR_0500 (287 aa).

The 274-residue stretch at 7–280 (FAVVTDGGLD…PRALGVAAAP (274 aa)) folds into the DegV domain. Positions 62 and 93 each coordinate hexadecanoate.

Functionally, may bind long-chain fatty acids, such as palmitate, and may play a role in lipid transport or fatty acid metabolism. The protein is DegV domain-containing protein DR_0500 of Deinococcus radiodurans (strain ATCC 13939 / DSM 20539 / JCM 16871 / CCUG 27074 / LMG 4051 / NBRC 15346 / NCIMB 9279 / VKM B-1422 / R1).